The sequence spans 183 residues: Mitochondrial inner membrane protease subunit 2 (183 aa).

A helical membrane pass occupies residues 13 to 35; it reads AFVSGFFVAVPVTVTVLDRLAYV. Active-site residues include serine 42 and lysine 90. Residues 161–183 form a disordered region; sequence SVPPDRRPLLNWDRAAEDKYDDD. Residues 164–183 are compositionally biased toward basic and acidic residues; that stretch reads PDRRPLLNWDRAAEDKYDDD.

The protein belongs to the peptidase S26 family. IMP2 subfamily. In terms of assembly, heterodimer of 2 subunits, IMMPL1 and IMMPL2.

It is found in the mitochondrion inner membrane. Its function is as follows. Catalyzes the removal of transit peptides required for the targeting of proteins from the mitochondrial matrix, across the inner membrane, into the inter-membrane space. In Danio rerio (Zebrafish), this protein is Mitochondrial inner membrane protease subunit 2 (immp2l).